We begin with the raw amino-acid sequence, 362 residues long: 3-dehydroquinate synthase (362 aa).

NAD(+) is bound by residues 71 to 76, 105 to 109, 129 to 130, lysine 142, lysine 151, and 169 to 172; these read DGEQYK, GVIGD, TT, and CLKT. Zn(2+) contacts are provided by glutamate 184, histidine 247, and histidine 264.

This sequence belongs to the sugar phosphate cyclases superfamily. Dehydroquinate synthase family. It depends on Co(2+) as a cofactor. Zn(2+) is required as a cofactor. NAD(+) serves as cofactor.

The protein resides in the cytoplasm. The enzyme catalyses 7-phospho-2-dehydro-3-deoxy-D-arabino-heptonate = 3-dehydroquinate + phosphate. Its pathway is metabolic intermediate biosynthesis; chorismate biosynthesis; chorismate from D-erythrose 4-phosphate and phosphoenolpyruvate: step 2/7. Its function is as follows. Catalyzes the conversion of 3-deoxy-D-arabino-heptulosonate 7-phosphate (DAHP) to dehydroquinate (DHQ). In Salmonella agona (strain SL483), this protein is 3-dehydroquinate synthase.